A 221-amino-acid polypeptide reads, in one-letter code: Immediate early response gene 2 protein (221 aa).

The residue at position 1 (Met-1) is an N-acetylmethionine. Positions 54–156 (THQPEFPPSR…EGEATSEVSN (103 aa)) are disordered. Positions 64-77 (RALDPRLHPPREPE) are enriched in basic and acidic residues. Residues 125 to 136 (SDLSDGSDAGLV) are compositionally biased toward low complexity.

It belongs to the IER family.

The protein resides in the cytoplasm. Its subcellular location is the nucleus. Its function is as follows. DNA-binding protein that seems to act as a transcription factor. Involved in the regulation of neuronal differentiation, acts upon JNK-signaling pathway activation and plays a role in neurite outgrowth in hippocampal cells. May mediate with FIBP FGF-signaling in the establishment of laterality in the embryo. Promotes cell motility, seems to stimulate tumor metastasis. This Rattus norvegicus (Rat) protein is Immediate early response gene 2 protein (Ier2).